The primary structure comprises 411 residues: 2,3-bisphosphoglycerate-independent phosphoglycerate mutase (411 aa).

The protein belongs to the BPG-independent phosphoglycerate mutase family. A-PGAM subfamily. In terms of assembly, homotetramer. Requires Mg(2+) as cofactor.

It catalyses the reaction (2R)-2-phosphoglycerate = (2R)-3-phosphoglycerate. It functions in the pathway carbohydrate degradation; glycolysis; pyruvate from D-glyceraldehyde 3-phosphate: step 3/5. Its activity is regulated as follows. Inhibited to approximately 20% by EDTA. Catalyzes the interconversion of 2-phosphoglycerate and 3-phosphoglycerate. The protein is 2,3-bisphosphoglycerate-independent phosphoglycerate mutase (apgM) of Pyrococcus furiosus (strain ATCC 43587 / DSM 3638 / JCM 8422 / Vc1).